The sequence spans 217 residues: MKFFVDTADVNEIRELSETGLLDGVTTNPSLIMKSGRPILEVTREICEIVDGPVSAEVTAVDFKEMMREADILSKIADNIAIKVPLTMDGLKACKALTSSGRMVNVTLCFSANQALLAAKAGATFISPFIGRIDDMGIDGMELIAEIRTIYDNYDFDTEILAASIRSVNHVKQAAIIGADVATVPPAVLKSLVKHPLTDKGLEAFLADWAKTGQKIG.

Lys83 serves as the catalytic Schiff-base intermediate with substrate.

The protein belongs to the transaldolase family. Type 3B subfamily.

The protein resides in the cytoplasm. It carries out the reaction D-sedoheptulose 7-phosphate + D-glyceraldehyde 3-phosphate = D-erythrose 4-phosphate + beta-D-fructose 6-phosphate. Its pathway is carbohydrate degradation; pentose phosphate pathway; D-glyceraldehyde 3-phosphate and beta-D-fructose 6-phosphate from D-ribose 5-phosphate and D-xylulose 5-phosphate (non-oxidative stage): step 2/3. Its function is as follows. Transaldolase is important for the balance of metabolites in the pentose-phosphate pathway. This is Probable transaldolase from Chelativorans sp. (strain BNC1).